The primary structure comprises 447 residues: Phosphoglucosamine mutase (447 aa).

The Phosphoserine intermediate role is filled by Ser-102. Mg(2+)-binding residues include Ser-102, Asp-241, Asp-243, and Asp-245. Phosphoserine is present on Ser-102.

It belongs to the phosphohexose mutase family. Mg(2+) serves as cofactor. In terms of processing, activated by phosphorylation.

The enzyme catalyses alpha-D-glucosamine 1-phosphate = D-glucosamine 6-phosphate. Catalyzes the conversion of glucosamine-6-phosphate to glucosamine-1-phosphate. The sequence is that of Phosphoglucosamine mutase from Pseudomonas savastanoi pv. phaseolicola (strain 1448A / Race 6) (Pseudomonas syringae pv. phaseolicola (strain 1448A / Race 6)).